We begin with the raw amino-acid sequence, 280 residues long: L-aspartate dehydrogenase (280 aa).

NAD(+) contacts are provided by alanine 134 and asparagine 202. The active site involves histidine 232.

Belongs to the L-aspartate dehydrogenase family.

It carries out the reaction L-aspartate + NADP(+) + H2O = oxaloacetate + NH4(+) + NADPH + H(+). It catalyses the reaction L-aspartate + NAD(+) + H2O = oxaloacetate + NH4(+) + NADH + H(+). It participates in cofactor biosynthesis; NAD(+) biosynthesis; iminoaspartate from L-aspartate (dehydrogenase route): step 1/1. Functionally, specifically catalyzes the NAD or NADP-dependent dehydrogenation of L-aspartate to iminoaspartate. This chain is L-aspartate dehydrogenase, found in Bradyrhizobium diazoefficiens (strain JCM 10833 / BCRC 13528 / IAM 13628 / NBRC 14792 / USDA 110).